The sequence spans 205 residues: GTP cyclohydrolase-2 (205 aa).

Residue 49–53 (RLHSE) participates in GTP binding. Positions 54, 65, and 67 each coordinate Zn(2+). GTP-binding positions include glutamine 70, 92–94 (EGR), and threonine 114. Catalysis depends on aspartate 126, which acts as the Proton acceptor. Arginine 128 acts as the Nucleophile in catalysis. Threonine 149 and lysine 154 together coordinate GTP.

It belongs to the GTP cyclohydrolase II family. The cofactor is Zn(2+).

The enzyme catalyses GTP + 4 H2O = 2,5-diamino-6-hydroxy-4-(5-phosphoribosylamino)-pyrimidine + formate + 2 phosphate + 3 H(+). It participates in cofactor biosynthesis; riboflavin biosynthesis; 5-amino-6-(D-ribitylamino)uracil from GTP: step 1/4. Its function is as follows. Catalyzes the conversion of GTP to 2,5-diamino-6-ribosylamino-4(3H)-pyrimidinone 5'-phosphate (DARP), formate and pyrophosphate. The polypeptide is GTP cyclohydrolase-2 (Pseudomonas entomophila (strain L48)).